We begin with the raw amino-acid sequence, 789 residues long: LPS-assembly protein LptD (789 aa).

A signal peptide spans 1–39; the sequence is MPPRQLSQTTPSCAVVPRKRRLVAALIAVPGLMPALAHA.

The protein belongs to the LptD family. Component of the lipopolysaccharide transport and assembly complex. Interacts with LptE and LptA.

The protein resides in the cell outer membrane. Its function is as follows. Together with LptE, is involved in the assembly of lipopolysaccharide (LPS) at the surface of the outer membrane. This chain is LPS-assembly protein LptD, found in Paraburkholderia xenovorans (strain LB400).